The following is a 687-amino-acid chain: MSVRYPLLNRELGILGFNERVLAQAADPQVPLLERLRFICITSSNLDEFFEVRMAGLQEQIRDNPGAMTPDGMSLQHAYDLVVERAQRLVHRQYTMLHETVLPALEQEGIYFHNSDSWSDAQLEWARRYFLDELLPVLTPIGLDPAHPFPRVLNKSLNFVVELEGRDAFGRQAVMGIVQAPRALPRVVQMPQALSGFEHGFVLLSSFMQRFVGELFPQLVVKSCNQFRITRNSELFVDEDEITNLRVALQGELPARHLGNAVRLEVSADTPQHIVRRLLEESGLGEKDCYRVIGSVNLVRLMQIPDLVDRPDLKFTPFTASIPPAIANATTMFDAIDEGDILLHHPYESFQPVLELLQQAARDPSVVAIKQTIYRTGTDSPLMDALMEAARNGKEVTVVVELLARFDEETNINWASQLEAVGAHVVYGVVGHKCHAKMMLIVRRVMQGGKATLRRYVHLGTGNYHPRTARLYTDFGLMTADQKICEDVHHVFQQLTGIGGELALHELWQSPFTLHPRIIESIRTEIDNARAGKRARIVAKMNALLEPSVIAALYEASQAGVKVDLIVRGVCALKPGVPGLSENITVRSIVGRFLEHHRIYYFHADGAEHVYLSSADWMDRNLFRRVEVAFPIRERKLKRRVIAEGLSVCLGDNQSAWQMQSDGHYRRRRAGKTVRNAQLGLLAKFCS.

Position 45 (Asn-45) interacts with ATP. Mg(2+) contacts are provided by Arg-375 and Arg-405. His-435 (phosphohistidine intermediate) is an active-site residue. The ATP site is built by Tyr-472, Arg-568, and His-596.

This sequence belongs to the polyphosphate kinase 1 (PPK1) family. It depends on Mg(2+) as a cofactor. In terms of processing, an intermediate of this reaction is the autophosphorylated ppk in which a phosphate is covalently linked to a histidine residue through a N-P bond.

It catalyses the reaction [phosphate](n) + ATP = [phosphate](n+1) + ADP. Catalyzes the reversible transfer of the terminal phosphate of ATP to form a long-chain polyphosphate (polyP). The chain is Polyphosphate kinase from Burkholderia multivorans (strain ATCC 17616 / 249).